The primary structure comprises 386 residues: Succinate--CoA ligase [ADP-forming] subunit beta (386 aa).

Positions K9–L244 constitute an ATP-grasp domain. ATP-binding positions include K46, G53–G55, V102, and E107. Mg(2+) contacts are provided by N199 and D213. Residues N264 and G321–M323 contribute to the substrate site.

It belongs to the succinate/malate CoA ligase beta subunit family. In terms of assembly, heterotetramer of two alpha and two beta subunits. Mg(2+) is required as a cofactor.

The catalysed reaction is succinate + ATP + CoA = succinyl-CoA + ADP + phosphate. It carries out the reaction GTP + succinate + CoA = succinyl-CoA + GDP + phosphate. The protein operates within carbohydrate metabolism; tricarboxylic acid cycle; succinate from succinyl-CoA (ligase route): step 1/1. Functionally, succinyl-CoA synthetase functions in the citric acid cycle (TCA), coupling the hydrolysis of succinyl-CoA to the synthesis of either ATP or GTP and thus represents the only step of substrate-level phosphorylation in the TCA. The beta subunit provides nucleotide specificity of the enzyme and binds the substrate succinate, while the binding sites for coenzyme A and phosphate are found in the alpha subunit. The chain is Succinate--CoA ligase [ADP-forming] subunit beta from Chlamydia pneumoniae (Chlamydophila pneumoniae).